Reading from the N-terminus, the 115-residue chain is ComG operon protein 5 (115 aa).

The propeptide at 1–7 is leader sequence; that stretch reads MWRENKG. An N-methylphenylalanine modification is found at F8. A helical membrane pass occupies residues 13 to 31; the sequence is TMSALSLWLFVLLTVVPLW.

In terms of processing, processing of ComGE in competent cells requires ComC.

Its subcellular location is the cell membrane. The protein resides in the cell surface. In terms of biological role, required for transformation and DNA binding. The polypeptide is ComG operon protein 5 (comGE) (Bacillus subtilis (strain 168)).